The sequence spans 94 residues: Large ribosomal subunit protein bL27 (94 aa).

Residues 1–9 (MTLNNLQLF) constitute a propeptide that is removed on maturation. Residues 9-33 (FAHKKGGGSTSNGRDSQAKRLGAKA) are disordered.

Belongs to the bacterial ribosomal protein bL27 family. The N-terminus is cleaved by ribosomal processing cysteine protease Prp.

This Streptococcus pneumoniae serotype 4 (strain ATCC BAA-334 / TIGR4) protein is Large ribosomal subunit protein bL27.